We begin with the raw amino-acid sequence, 498 residues long: Lysine--tRNA ligase (498 aa).

The Mg(2+) site is built by Glu407 and Glu414.

It belongs to the class-II aminoacyl-tRNA synthetase family. In terms of assembly, homodimer. The cofactor is Mg(2+).

It localises to the cytoplasm. The enzyme catalyses tRNA(Lys) + L-lysine + ATP = L-lysyl-tRNA(Lys) + AMP + diphosphate. In Rhizobium etli (strain CIAT 652), this protein is Lysine--tRNA ligase.